The following is a 495-amino-acid chain: MSNNKKLTSLFGAPVSDRENSMTAGPRGPLVMQDWYFLEQMAHFDREVIPERRMHAKGSGAFGTFTVTNDITQYTSASIFSEVGKQTEMFARFSTVAGERGAADAERDIRGFALKFYTDEGNWDLVGNNTPVFFFRDPKLFASLNHAVKRDPRTNMRSAQNNWDFWTSLPEALHQVTILMSDRGIPKGYRNMHGFGSHTYSMYNDKGERVWVKFHHRTQQGIENLQPDEAAKIIADDRESSQRDLFEAIENKDYPKWKTYIQVMTEEQARNHKDNPFDLTKVWYKGDYPLIEVGEWELNRNPDNYFQDVEQAAFAPTNIVPGIDFSPDKMLQGRLFSYGDAQRYRLGVNHWQIPVNQPKGVGVENICPFSRDGQMRILDNNQGGGTHYYPNSDGSFEDQPEFKKPGLKVEGEAYEYDFRQDDDNYFEQPGRLFRLQSKEQQERIFENTANEMQGTTLEVQHRHIRHCYKADSEYGKGVARALGVDINDVDLEIKD.

The disordered stretch occupies residues 1–25 (MSNNKKLTSLFGAPVSDRENSMTAG). Active-site residues include His55 and Asn128. Tyr338 contacts heme.

It belongs to the catalase family. In terms of assembly, homodimer. Heme serves as cofactor.

It catalyses the reaction 2 H2O2 = O2 + 2 H2O. In terms of biological role, decomposes hydrogen peroxide into water and oxygen; serves to protect cells from the toxic effects of hydrogen peroxide. This chain is Catalase B (katB), found in Staphylococcus xylosus.